The sequence spans 363 residues: Protein Wnt-5 (363 aa).

An N-terminal signal peptide occupies residues 1-27; that stretch reads MVGMTRIQSAEPVWILFVLTLYSSVLM. N-linked (GlcNAc...) asparagine glycans are attached at residues Asn48 and Asn98. 11 cysteine pairs are disulfide-bonded: Cys88/Cys99, Cys137/Cys145, Cys147/Cys165, Cys221/Cys235, Cys223/Cys230, Cys292/Cys323, Cys308/Cys318, Cys322/Cys362, Cys338/Cys353, Cys340/Cys350, and Cys345/Cys346. A lipid anchor (O-palmitoleoyl serine; by PORCN) is attached at Ser227.

Belongs to the Wnt family. In terms of processing, palmitoleoylation is required for efficient binding to frizzled receptors. Depalmitoleoylation leads to Wnt signaling pathway inhibition.

The protein localises to the secreted. It is found in the extracellular space. The protein resides in the extracellular matrix. Its function is as follows. Ligand for members of the frizzled family of seven transmembrane receptors. Probable developmental protein. May be a signaling molecule which affects the development of discrete regions of tissues. Is likely to signal over only few cell diameters. In Halocynthia roretzi (Sea squirt), this protein is Protein Wnt-5 (WNT5).